The following is a 433-amino-acid chain: 23S rRNA (uracil(1939)-C(5))-methyltransferase RlmD (433 aa).

Residues 10-68 (RTTTRQIITVSVNDLDSFGQGVARHNGKTLFIPGLLPQENAEVTVTEDKKQYARAKVVR) form the TRAM domain. Interaction with RNA regions lie at residues 23 to 40 (DLDS…KTLF) and 58 to 63 (KKQYAR). Residues cysteine 81, cysteine 87, cysteine 90, and cysteine 162 each coordinate [4Fe-4S] cluster. S-adenosyl-L-methionine is bound by residues glutamine 265, phenylalanine 294, asparagine 299, glutamate 315, asparagine 342, and aspartate 363. The active-site Nucleophile is the cysteine 389.

This sequence belongs to the class I-like SAM-binding methyltransferase superfamily. RNA M5U methyltransferase family. RlmD subfamily.

The enzyme catalyses uridine(1939) in 23S rRNA + S-adenosyl-L-methionine = 5-methyluridine(1939) in 23S rRNA + S-adenosyl-L-homocysteine + H(+). Its function is as follows. Catalyzes the formation of 5-methyl-uridine at position 1939 (m5U1939) in 23S rRNA. In Escherichia coli (strain K12), this protein is 23S rRNA (uracil(1939)-C(5))-methyltransferase RlmD.